The primary structure comprises 126 residues: MGFLWALFSVGLVSAAQLLLRSAMVALPPLTDIVAFLQHLLHFQPGTVGLFFGLLGYLLSMVCWYFALHRLPLSKAYALLSLSYILVWAAAIWLPGWHEPFYWQSLLGVTIIVAGVLTIFWPVKRR.

Residues 1-21 (MGFLWALFSVGLVSAAQLLLR) form a helical membrane-spanning segment. Over 22–47 (SAMVALPPLTDIVAFLQHLLHFQPGT) the chain is Periplasmic. The helical transmembrane segment at 48–68 (VGLFFGLLGYLLSMVCWYFAL) threads the bilayer. The Cytoplasmic segment spans residues 69–76 (HRLPLSKA). A helical transmembrane segment spans residues 77–97 (YALLSLSYILVWAAAIWLPGW). Residues 98 to 100 (HEP) lie on the Periplasmic side of the membrane. Residues 101 to 121 (FYWQSLLGVTIIVAGVLTIFW) traverse the membrane as a helical segment. The Cytoplasmic segment spans residues 122-126 (PVKRR).

This sequence belongs to the ArnF family. Heterodimer of ArnE and ArnF.

The protein resides in the cell inner membrane. Its pathway is bacterial outer membrane biogenesis; lipopolysaccharide biosynthesis. Functionally, translocates 4-amino-4-deoxy-L-arabinose-phosphoundecaprenol (alpha-L-Ara4N-phosphoundecaprenol) from the cytoplasmic to the periplasmic side of the inner membrane. The protein is Probable 4-amino-4-deoxy-L-arabinose-phosphoundecaprenol flippase subunit ArnF of Klebsiella pneumoniae (strain 342).